The following is a 552-amino-acid chain: Transcription factor lcsF (552 aa).

4 disordered regions span residues 1 to 132, 169 to 209, 232 to 258, and 297 to 349; these read MAPA…DLDP, TSSY…ASLS, EATSTTHKEEGSAAKSPGALQQSHWSS, and ELTS…QHGA. Residues 31–55 form a basic motif region; the sequence is KDRKEKKRIQNRVAQRSYRSRMKAR. Positions 31 to 76 constitute a bZIP domain; that stretch reads KDRKEKKRIQNRVAQRSYRSRMKARLGELQSRLQAHEEQKAKEEAE. The tract at residues 56-63 is leucine-zipper; it reads LGELQSRL. The span at 64-79 shows a compositional bias: basic and acidic residues; sequence QAHEEQKAKEEAERCD. Polar residues-rich tracts occupy residues 98-119 and 169-186; these read TPPSGNNAGANDTEPSSINSAS and TSSYIQPSVPTPPVSLSQ. A compositionally biased stretch (polar residues) spans 298 to 347; that stretch reads LTSTGDLPNATWRPSQQFSGPETTPRSHNAENPTQQQSPINDDTPSTTQH.

Belongs to the bZIP family.

Its subcellular location is the nucleus. Its function is as follows. Transcription factor that regulates the expression of the gene cluster that mediates the biosynthesis of the lipopeptide antibiotics leucinostatins that show extensive biological activities, including antimalarial, antiviral, antibacterial, antifungal, and antitumor activities, as well as phytotoxic. All 20 genes in the cluster are up-regulated to some extent by lcsF, with the exception of lcsL and lcsP, which are down-regulated. The sequence is that of Transcription factor lcsF from Purpureocillium lilacinum (Paecilomyces lilacinus).